The primary structure comprises 245 residues: Complement C1q subcomponent subunit C (245 aa).

An N-terminal signal peptide occupies residues 1 to 28 (MVVGTSCQPQHGLYLLLLLLALPLRSQA). The region spanning 31-112 (GCYGIPGMPG…GPPGEPGEEG (82 aa)) is the Collagen-like domain. A 4-hydroxyproline mark is found at Pro-36, Pro-39, Pro-42, Pro-45, and Pro-63. The interval 42–119 (PGTPGKDGHD…EEGRYKQKHQ (78 aa)) is disordered. Lys-75 carries the 5-hydroxylysine modification. An O-linked (Gal...) hydroxylysine glycan is attached at Lys-75. Pro-81, Pro-96, Pro-99, and Pro-105 each carry 4-hydroxyproline. Positions 98–107 (DPGPRGPPGE) are enriched in pro residues. The C1q domain maps to 115-245 (KQKHQSVFTV…VFSGFLLFPD (131 aa)). An intrachain disulfide couples Cys-179 to Cys-193.

Core component of the complement C1 complex, a calcium-dependent complex composed of 1 molecule of the C1Q subcomplex, 2 molecules of C1R and 2 molecules of C1S. The C1Q subcomplex is composed 18 subunits: 3 chains of C1QA, C1QB, and C1QC trimerize to form 6 collagen-like triple helices connected to six globular ligand-recognition modules (C1q domain). In terms of processing, O-linked glycans consist of Glc-Gal disaccharides bound to the oxygen atom of post-translationally added hydroxyl groups.

Its subcellular location is the secreted. The protein resides in the cell surface. With respect to regulation, the C1Q subcomplex is inhibited by sulfated molecules, such as triterpenoid sulfates, heparan sulfate, or chondroitin sulfates. Its function is as follows. Core component of the complement C1 complex, a multiprotein complex that initiates the classical pathway of the complement system, a cascade of proteins that leads to phagocytosis and breakdown of pathogens and signaling that strengthens the adaptive immune system. The classical complement pathway is initiated by the C1Q subcomplex of the C1 complex, which specifically binds IgG or IgM immunoglobulins complexed with antigens, forming antigen-antibody complexes on the surface of pathogens: C1QA, together with C1QB and C1QC, specifically recognizes and binds the Fc regions of IgG or IgM via its C1q domain. Immunoglobulin-binding activates the proenzyme C1R, which cleaves C1S, initiating the proteolytic cascade of the complement system. The C1Q subcomplex is activated by a hexamer of IgG complexed with antigens, while it is activated by a pentameric IgM. The C1Q subcomplex also recognizes and binds phosphatidylserine exposed on the surface of cells undergoing programmed cell death, possibly promoting activation of the complement system. This chain is Complement C1q subcomponent subunit C, found in Rattus norvegicus (Rat).